Here is a 399-residue protein sequence, read N- to C-terminus: MDSQRPEPREEEEEEQELRWMELDSEEALGTRTEGPSVVQGWGHLLQAVWRGPAGLVTQLLRQGASVEERDHAGRTPLHLAVLRGHAPLVRLLLQRGAPVGAVDRAGRTALHEAAWHGHSRVAELLLQRGASAAARSGTGLTPLHWAAALGHTLLAARLLEAPGPGPAAAEAEDARGWTAAHWAAAGGRLAVLELLAAGGAGLDGALLVAAAAGRGAALRFLLARGARVDARDGAGATALGLAAALGRSQDIEVLLGHGADPGIRDRHGRSALHRAAARGHLLAVQLLVTQGAEVDARDTLGLTPLHHASREGHVEVAGCLLDRGAQVDATGWLRKTPLHLAAERGHGPTVGLLLSRGASPTLRTQWAEVAQMPEGDLPQALPELGGGEKECEGIESTG.

10 ANK repeats span residues 40–69 (QGWG…SVEE), 73–102 (AGRT…PVGA), 106–135 (AGRT…SAAA), 139–168 (TGLT…PGPA), 176–205 (RGWT…GLDG), 207–231 (LLVA…RVDA), 235–264 (AGAT…DPGI), 268–297 (HGRS…EVDA), 301–330 (LGLT…QVDA), and 334–363 (LRKT…SPTL). Residues 377–399 (DLPQALPELGGGEKECEGIESTG) are disordered.

The protein is Ankyrin repeat domain-containing protein 65 (ANKRD65) of Homo sapiens (Human).